The chain runs to 215 residues: Cytochrome b6 (215 aa).

Residues I32–F52 traverse the membrane as a helical segment. C35 contacts heme c. Heme b is bound by residues H86 and H100. The next 3 helical transmembrane spans lie at A90 to F110, L116 to Y136, and L186 to I206. The heme b site is built by H187 and H202.

The protein belongs to the cytochrome b family. PetB subfamily. The 4 large subunits of the cytochrome b6-f complex are cytochrome b6, subunit IV (17 kDa polypeptide, PetD), cytochrome f and the Rieske protein, while the 4 small subunits are PetG, PetL, PetM and PetN. The complex functions as a dimer. Requires heme b as cofactor. Heme c serves as cofactor.

The protein resides in the plastid. It is found in the chloroplast thylakoid membrane. Its function is as follows. Component of the cytochrome b6-f complex, which mediates electron transfer between photosystem II (PSII) and photosystem I (PSI), cyclic electron flow around PSI, and state transitions. The protein is Cytochrome b6 of Welwitschia mirabilis (Tree tumbo).